The following is a 350-amino-acid chain: Small ribosomal subunit biogenesis GTPase RsgA (350 aa).

Residues Met-1–Asn-17 show a composition bias toward polar residues. The interval Met-1–Glu-27 is disordered. One can recognise a CP-type G domain in the interval Thr-104–Phe-273. Residues Asn-160–Asp-163 and Gly-214–Ser-222 contribute to the GTP site. 4 residues coordinate Zn(2+): Cys-297, Cys-302, His-304, and Cys-310.

It belongs to the TRAFAC class YlqF/YawG GTPase family. RsgA subfamily. In terms of assembly, monomer. Associates with 30S ribosomal subunit, binds 16S rRNA. It depends on Zn(2+) as a cofactor.

The protein resides in the cytoplasm. Its function is as follows. One of several proteins that assist in the late maturation steps of the functional core of the 30S ribosomal subunit. Helps release RbfA from mature subunits. May play a role in the assembly of ribosomal proteins into the subunit. Circularly permuted GTPase that catalyzes slow GTP hydrolysis, GTPase activity is stimulated by the 30S ribosomal subunit. In Salmonella typhi, this protein is Small ribosomal subunit biogenesis GTPase RsgA.